The primary structure comprises 778 residues: WGCLRLPLPLCHALAAHCRCPASHTLRCREPLTVSSLSALLLGAHRPTDVIIENQALLTSLTRDDTRMLWDLRHLTISNSGLQYISDDAFQDNHRLSHVNLSFNALTSLSWKTFQHLPLQELTLEGNPFNCSCGIRWLQLWQNGSRAELGNQSLLCWEGSMLVALDSHPLHDCEPPTARIEHPDVVLRQGDSVNLTCHIWGEPSATGEWVLPHVGSEPSVTKLSEWELVLEINNISSSLNHKDLTCRAENSVGLAEDSVMLNVTFPPVILLLSEAIPQHFWCIPFSVDSNPTPRILWLFNGSMLPEGPYIHTRIVEYEPNSTVLHGCLQLNRPTHVNNGNYTLVVQNPLGRAARSIQGRFMDNPFSFSPEEPIPVSISPLGTRNSSLEGPVETADEHTFGVSVAVALAVFASLFLSVMLIALNKCGHRSKFGINRSAVLAPEDGLAMSLHFMTLGSSPVSSTESKLDGLKSNFIENPQYFCNACVHHVQRRDIVLKWELGEGAFGKVFLAECSHLLPEQEKTLVAVKALKEVTENARLDFQREAELLTVLQHEHIVKFYGVCTEGDPLIMVFEYMKHGDLNRFLRSHGPDAKILDQGQGQPCGQLTLSHMLQIATQIASGMVYLASLHFVHRDLATRNCLVGHDLVVKIGDFGMSRDIYSTDYYRVGGRTMLPIRWMPPESILYRKFTTESDIWSFGVVLWEIFTYGKQPWYQLSNTEAIECITQGRELERPRTCPSEVYDIMQSCWQREPQQRSIQDIHSRLQALVKTPPIYLDILG.

The N-terminal stretch at Trp-1 to Leu-14 is a signal peptide. At Ala-15 to Gly-400 the chain is on the extracellular side. A disulfide bond links Cys-18 and Cys-20. LRR repeat units lie at residues Asp-71 to Asp-92 and Arg-95 to His-116. N-linked (GlcNAc...) asparagine glycans are attached at residues Asn-100, Asn-130, Asn-143, Asn-151, Asn-194, Asn-234, Asn-262, Asn-300, Asn-320, Asn-340, and Asn-384. The LRRCT domain maps to Asn-127–Pro-175. A disulfide bond links Cys-133 and Cys-173. Ig-like C2-type domains follow at residues Pro-175 to Asn-262 and Trp-281 to Asn-347. Cys-282 and Cys-327 are oxidised to a cystine. The chain crosses the membrane as a helical span at residues Val-401–Ala-421. Residues Leu-422–Gly-778 are Cytoplasmic-facing. At Tyr-479 the chain carries Phosphotyrosine; by autocatalysis. The 271-residue stretch at Ile-493–Leu-763 folds into the Protein kinase domain. Residues Leu-499–Val-507 and Lys-527 each bind ATP. Catalysis depends on Asp-633, which acts as the Proton acceptor. Phosphotyrosine; by autocatalysis occurs at positions 659, 663, 664, and 773.

This sequence belongs to the protein kinase superfamily. Tyr protein kinase family. Insulin receptor subfamily. Exists in a dynamic equilibrium between monomeric (low affinity) and dimeric (high affinity) structures. Homodimerization is induced by NGF dimer binding. Interacts with PTPRS. Ligand-mediated auto-phosphorylation. Post-translationally, ubiquitinated. Undergoes polyubiquitination upon activation; regulated by NGFR. Ubiquitination regulates the internalization of the receptor.

The protein resides in the cell membrane. The protein localises to the early endosome membrane. It localises to the late endosome membrane. It is found in the recycling endosome membrane. It carries out the reaction L-tyrosyl-[protein] + ATP = O-phospho-L-tyrosyl-[protein] + ADP + H(+). With respect to regulation, the pro-survival signaling effect of NTRK1 in neurons requires its endocytosis into signaling early endosomes and its retrograde axonal transport. Functionally, receptor tyrosine kinase involved in the development and the maturation of the central and peripheral nervous systems through regulation of proliferation, differentiation and survival of sympathetic and nervous neurons. High affinity receptor for NGF which is its primary ligand, it can also bind and be activated by NTF3/neurotrophin-3. Upon dimeric NGF ligand-binding, undergoes homodimerization, autophosphorylation and activation. Recruits, phosphorylates and/or activates several downstream effectors that regulate distinct overlapping signaling cascades driving cell survival and differentiation. In absence of ligand and activation, may promote cell death, making the survival of neurons dependent on trophic factors. The protein is High affinity nerve growth factor receptor (NTRK1) of Gallus gallus (Chicken).